We begin with the raw amino-acid sequence, 199 residues long: MAKILVLYYSMYGHIETLASAIAEGAQKVDGVEVTIKRVPETMPADAFAKAGGKTDQKAPVATPQELADYHGIIFGTPTRFGNMAGQMRTFLDQTGGLWASGALYGKVASVFASTGTGGGQEHTITSTWTTLAHHGFIIVPIGYGATELFDVSQTRGGTPYGATTIAGGDGSRQPSAEELAIARFQGEHVAKITAKLAR.

The Flavodoxin-like domain maps to 4–190 (ILVLYYSMYG…AIARFQGEHV (187 aa)). Residues 10–15 (SMYGHI) and 79–81 (TRF) each bind FMN. Tyrosine 12 contributes to the NAD(+) binding site. A substrate-binding site is contributed by tryptophan 99. Residues 114 to 119 (STGTGG) and histidine 134 contribute to the FMN site.

Belongs to the WrbA family. Requires FMN as cofactor.

The enzyme catalyses a quinone + NADH + H(+) = a quinol + NAD(+). The catalysed reaction is a quinone + NADPH + H(+) = a quinol + NADP(+). In Yersinia enterocolitica serotype O:8 / biotype 1B (strain NCTC 13174 / 8081), this protein is NAD(P)H dehydrogenase (quinone).